The chain runs to 169 residues: Small proline-rich protein 3 (169 aa).

Over residues 1–24 (MSSYQQKQTFTPPPQLQQQQVKQP) the composition is skewed to low complexity. Positions 1–57 (MSSYQQKQTFTPPPQLQQQQVKQPSQPPPQEIFVPTTKEPCHSKVPQPGNTKIPEPG) are disordered. Ser2 is subject to N-acetylserine. 14 consecutive repeat copies span residues 43 to 50 (SKVPQPGN), 51 to 58 (TKIPEPGC), 59 to 66 (TKVPEPGC), 67 to 74 (TKVPEPGC), 75 to 82 (TKVPEPGC), 83 to 90 (TKVPEPGC), 91 to 98 (TKVPEPGC), 99 to 106 (TKVPEPGY), 107 to 114 (TKVPEPGS), 115 to 122 (IKVPDQGF), 123 to 130 (IKFPEPGA), 131 to 138 (IKVPEQGY), 139 to 146 (TKVPVPGY), and 147 to 154 (TKLPEPCP). Residues 43-154 (SKVPQPGNTK…GYTKLPEPCP (112 aa)) are 14 X 8 AA approximate tandem repeats. The disordered stretch occupies residues 150-169 (PEPCPSTVTPGPAQQKTKQK). Residues 155-169 (STVTPGPAQQKTKQK) show a composition bias toward polar residues.

Its subcellular location is the cytoplasm. Functionally, cross-linked envelope protein of keratinocytes. This chain is Small proline-rich protein 3 (SPRR3), found in Homo sapiens (Human).